The following is a 372-amino-acid chain: Germination protease (372 aa).

Positions 1–15 (MNRSIDLSMYSVRTD) are excised as a propeptide.

Belongs to the peptidase A25 family. In terms of assembly, homotetramer. Autoproteolytically processed. The inactive tetrameric zymogen termed p46 autoprocesses to a smaller form termed p41, which is active only during spore germination.

The catalysed reaction is Endopeptidase action with P4 Glu or Asp, P1 preferably Glu &gt; Asp, P1' hydrophobic and P2' Ala.. Initiates the rapid degradation of small, acid-soluble proteins during spore germination. The sequence is that of Germination protease from Geobacillus sp. (strain WCH70).